The sequence spans 255 residues: Probable cyclic nucleotide phosphodiesterase syc0937_d (255 aa).

Fe cation contacts are provided by Asp19, His21, Asp59, Asn89, His157, His196, and His198. AMP is bound by residues His21, Asp59, and 89 to 90 (NH). His198 provides a ligand contact to AMP.

The protein belongs to the cyclic nucleotide phosphodiesterase class-III family. Fe(2+) is required as a cofactor.

This is Probable cyclic nucleotide phosphodiesterase syc0937_d from Synechococcus sp. (strain ATCC 27144 / PCC 6301 / SAUG 1402/1) (Anacystis nidulans).